We begin with the raw amino-acid sequence, 869 residues long: AP-3 complex subunit delta (869 aa).

S2 carries the N-acetylserine modification. 7 HEAT repeats span residues 33–70 (NFIS…LHGV), 107–142 (SVML…GTHD), 143–179 (LARD…KYHD), 180–216 (AVKV…KDPQ), 218–254 (CLPL…IEPR), 292–329 (AAVK…KHLW), and 330–366 (AVLE…EDNV). Positions 738–869 (ISQDSFNPKR…EQVIIPDFLL (132 aa)) are disordered. A compositionally biased stretch (polar residues) spans 769–780 (ITPQAKTNIQTA). The segment covering 815–830 (QEKEESSRIENHQNSE) has biased composition (basic and acidic residues). Residues 831-850 (KKKKKKKKKKGEGSSKHKSR) show a composition bias toward basic residues.

This sequence belongs to the adaptor complexes large subunit family. In terms of assembly, adaptor protein complex 3 (AP-3) is a heterotetramer composed of two large adaptins (delta-type subunit and beta-type subunit), a medium adaptin (mu-type subunit) and a small adaptin (sigma-type subunit). Binds to EPSIN2.

Its subcellular location is the cytoplasm. It localises to the golgi apparatus membrane. Part of the AP-3 complex, an adaptor-related complex which seems to be clathrin-associated. The complex is associated with the Golgi region as well as more peripheral structures. It facilitates the budding of vesicles from the Golgi membrane and may be directly involved in trafficking to the vacuole. It also function in maintaining the identity of lytic vacuoles and in regulating the transition between storage and lytic vacuoles. The polypeptide is AP-3 complex subunit delta (DELTA-ADR) (Arabidopsis thaliana (Mouse-ear cress)).